We begin with the raw amino-acid sequence, 134 residues long: Inner membrane protein YqjE (134 aa).

Residues 1–55 (MADTHHAQGPGKSVLGIGQRIVSIMVEMVETRLRLAVVELEEEKANLFQLLLMLG) are Cytoplasmic-facing. A helical membrane pass occupies residues 56-76 (LTMLFAAFGLMSLMVLIIWAV). The Periplasmic portion of the chain corresponds to 77-83 (DPQYRLN). Residues 84-104 (AMIATTVVLLLLALIGGIWTL) form a helical membrane-spanning segment. The Cytoplasmic segment spans residues 105–134 (RKSRKSTLLRHTRHELANDRQLLEEESREQ).

Its subcellular location is the cell inner membrane. This is Inner membrane protein YqjE (yqjE) from Escherichia coli O157:H7.